The following is a 161-amino-acid chain: ATP synthase subunit b (161 aa).

The chain crosses the membrane as a helical span at residues 10–29; the sequence is AVVQLLNFLFLLWILNKLLY.

This sequence belongs to the ATPase B chain family. As to quaternary structure, F-type ATPases have 2 components, F(1) - the catalytic core - and F(0) - the membrane proton channel. F(1) has five subunits: alpha(3), beta(3), gamma(1), delta(1), epsilon(1). F(0) has three main subunits: a(1), b(2) and c(10-14). The alpha and beta chains form an alternating ring which encloses part of the gamma chain. F(1) is attached to F(0) by a central stalk formed by the gamma and epsilon chains, while a peripheral stalk is formed by the delta and b chains.

The protein resides in the cell inner membrane. Its function is as follows. F(1)F(0) ATP synthase produces ATP from ADP in the presence of a proton or sodium gradient. F-type ATPases consist of two structural domains, F(1) containing the extramembraneous catalytic core and F(0) containing the membrane proton channel, linked together by a central stalk and a peripheral stalk. During catalysis, ATP synthesis in the catalytic domain of F(1) is coupled via a rotary mechanism of the central stalk subunits to proton translocation. In terms of biological role, component of the F(0) channel, it forms part of the peripheral stalk, linking F(1) to F(0). The chain is ATP synthase subunit b from Fervidobacterium nodosum (strain ATCC 35602 / DSM 5306 / Rt17-B1).